We begin with the raw amino-acid sequence, 151 residues long: Small ribosomal subunit protein uS15 (151 aa).

A disordered region spans residues 1–20 (MGRMHSNGKGISGSSLPYNR).

It belongs to the universal ribosomal protein uS15 family. As to quaternary structure, component of the small ribosomal subunit. Part of the small subunit (SSU) processome, composed of more than 70 proteins and the RNA chaperone small nucleolar RNA (snoRNA) U3.

Its subcellular location is the cytoplasm. It is found in the nucleus. The protein localises to the nucleolus. In terms of biological role, component of the small ribosomal subunit. The ribosome is a large ribonucleoprotein complex responsible for the synthesis of proteins in the cell. Part of the small subunit (SSU) processome, first precursor of the small eukaryotic ribosomal subunit. During the assembly of the SSU processome in the nucleolus, many ribosome biogenesis factors, an RNA chaperone and ribosomal proteins associate with the nascent pre-rRNA and work in concert to generate RNA folding, modifications, rearrangements and cleavage as well as targeted degradation of pre-ribosomal RNA by the RNA exosome. The polypeptide is Small ribosomal subunit protein uS15 (rps13) (Dictyostelium discoideum (Social amoeba)).